Consider the following 193-residue polypeptide: MLDKLKESLRNSPVIKKGEYDYFVNPVTDGIPLTEPELLEEIADEIVRRFNPDPASVDKIVCIEAMGIHHATVLSLKTRIPFVVVRKRRYGLPGEVAVHQMTGYSEGELYINGVDGDDRVMVIDDVVSTGGTLLAVLEALREMEVEVVDVVTVIDKGEGSRVVKERTGFTVRSLVKADVVDGRVTVEDIPDGG.

Belongs to the purine/pyrimidine phosphoribosyltransferase family. Archaeal HPRT subfamily. In terms of assembly, homodimer.

It is found in the cytoplasm. The catalysed reaction is IMP + diphosphate = hypoxanthine + 5-phospho-alpha-D-ribose 1-diphosphate. The enzyme catalyses GMP + diphosphate = guanine + 5-phospho-alpha-D-ribose 1-diphosphate. It functions in the pathway purine metabolism; IMP biosynthesis via salvage pathway; IMP from hypoxanthine: step 1/1. Its function is as follows. Catalyzes a salvage reaction resulting in the formation of IMP that is energically less costly than de novo synthesis. Prefers hypoxanthine, has 66% activity with guanine while activity with adenine, xanthine, uracil, orotate, or cytosine is negligible. This chain is Hypoxanthine/guanine phosphoribosyltransferase, found in Methanothermobacter marburgensis (strain ATCC BAA-927 / DSM 2133 / JCM 14651 / NBRC 100331 / OCM 82 / Marburg) (Methanobacterium thermoautotrophicum).